The primary structure comprises 937 residues: Periplasmic nitrate reductase (937 aa).

Residues 1 to 42 (MTSKIQGKKPTLSRRDFIKSAAAASAAASVGLSIPSVMSAEA) constitute a signal peptide (tat-type signal). A 4Fe-4S Mo/W bis-MGD-type domain is found at 49 to 110 (WKWDKSVCRF…FCAKIMYGAD (62 aa)). [4Fe-4S] cluster-binding residues include Cys56, Cys59, Cys63, and Cys96. Mo-bis(molybdopterin guanine dinucleotide) contacts are provided by residues Lys98, Gln166, Asn191, Cys195, 228–235 (WGANMAEM), Met433, Gln437, Asn543, 568–569 (SE), Lys591, Asp618, and 827–836 (TGRVLEHWHS). Trp903 is a binding site for substrate. Asn911 and Lys928 together coordinate Mo-bis(molybdopterin guanine dinucleotide).

Belongs to the prokaryotic molybdopterin-containing oxidoreductase family. NasA/NapA/NarB subfamily. In terms of assembly, component of the periplasmic nitrate reductase NapAB complex composed of NapA and NapB. It depends on [4Fe-4S] cluster as a cofactor. The cofactor is Mo-bis(molybdopterin guanine dinucleotide). In terms of processing, predicted to be exported by the Tat system. The position of the signal peptide cleavage has not been experimentally proven.

Its subcellular location is the periplasm. The catalysed reaction is 2 Fe(II)-[cytochrome] + nitrate + 2 H(+) = 2 Fe(III)-[cytochrome] + nitrite + H2O. Catalytic subunit of the periplasmic nitrate reductase complex NapAB. Receives electrons from NapB and catalyzes the reduction of nitrate to nitrite. In Helicobacter hepaticus (strain ATCC 51449 / 3B1), this protein is Periplasmic nitrate reductase.